The primary structure comprises 109 residues: Guanylin (109 aa).

Positions 1-21 (MNTFLFPTLCLLGVWAALAGG) are cleaved as a signal peptide. Positions 22 to 94 (VTVKDGEFSF…LERLETIAQD (73 aa)) are excised as a propeptide. 3 disulfides stabilise this stretch: C63/C76, C98/C106, and C101/C109.

Belongs to the guanylin family.

The protein localises to the secreted. Its function is as follows. Endogenous activator of intestinal guanylate cyclase. It stimulates this enzyme through the same receptor binding region as the heat-stable enterotoxins. This is Guanylin (GUCA2A) from Sus scrofa (Pig).